A 401-amino-acid chain; its full sequence is MTLITDIRLRRVLDSRGNATVEADVLTESGGFGRGKAPSGASTGEYEAIELPANEAIAKAREEALPRLIGEVHAGNQRDVDAALHAADGTDDFSGIGANSAVAISMAAAKAGADVLGAPLYQHLGGTFRGNEYPTPLGNIIGGGEHAADATNIQEFLAAPVGAPSVEEAVFANAAVHQEVHDILADRDLPAGKGDEGAWAPSVSDDEAFEIMDEAVETVADDFGFAISFGLDVAGAELYDDEADGYVYDDGVKSTEEQIEYIAGKVEEYDLVYVEDPLDENDYEAFADLTAQVGDQTLVCGDDLFVTNVERLQAGINADAGNSILIKPNQIGTLTDAVDAIELATASGYESVVSHRSGETEDTTIAHLAVATDAPFIKTGAVGGERTAKLNELIRIEDNAV.

Gln-154 is a binding site for (2R)-2-phosphoglycerate. Glu-196 serves as the catalytic Proton donor. 3 residues coordinate Mg(2+): Asp-232, Glu-275, and Asp-302. (2R)-2-phosphoglycerate-binding residues include Lys-327, Arg-356, Ser-357, and Lys-378. Lys-327 acts as the Proton acceptor in catalysis.

This sequence belongs to the enolase family. Requires Mg(2+) as cofactor.

Its subcellular location is the cytoplasm. The protein localises to the secreted. The protein resides in the cell surface. It carries out the reaction (2R)-2-phosphoglycerate = phosphoenolpyruvate + H2O. The protein operates within carbohydrate degradation; glycolysis; pyruvate from D-glyceraldehyde 3-phosphate: step 4/5. Functionally, catalyzes the reversible conversion of 2-phosphoglycerate (2-PG) into phosphoenolpyruvate (PEP). It is essential for the degradation of carbohydrates via glycolysis. The chain is Enolase from Haloarcula marismortui (strain ATCC 43049 / DSM 3752 / JCM 8966 / VKM B-1809) (Halobacterium marismortui).